Reading from the N-terminus, the 96-residue chain is Small ribosomal subunit protein bS6 (96 aa).

This sequence belongs to the bacterial ribosomal protein bS6 family.

Functionally, binds together with bS18 to 16S ribosomal RNA. The chain is Small ribosomal subunit protein bS6 (rpsF) from Streptomyces coelicolor (strain ATCC BAA-471 / A3(2) / M145).